Reading from the N-terminus, the 150-residue chain is Putative F-box protein At2g33655 (150 aa).

The 47-residue stretch at 1 to 47 (MEKMSDLPRELVEEILSRVPVKSMREVRVTCKTWNALSKHISKAEAA) folds into the F-box domain.

The protein is Putative F-box protein At2g33655 of Arabidopsis thaliana (Mouse-ear cress).